A 468-amino-acid chain; its full sequence is Argininosuccinate lyase (468 aa).

Belongs to the lyase 1 family. Argininosuccinate lyase subfamily.

It localises to the cytoplasm. It catalyses the reaction 2-(N(omega)-L-arginino)succinate = fumarate + L-arginine. The protein operates within amino-acid biosynthesis; L-arginine biosynthesis; L-arginine from L-ornithine and carbamoyl phosphate: step 3/3. The sequence is that of Argininosuccinate lyase from Alkalilimnicola ehrlichii (strain ATCC BAA-1101 / DSM 17681 / MLHE-1).